A 393-amino-acid chain; its full sequence is 1-deoxy-D-xylulose 5-phosphate reductoisomerase (393 aa).

NADPH contacts are provided by threonine 10, glycine 11, serine 12, isoleucine 13, arginine 37, glutamine 38, and asparagine 124. Lysine 125 provides a ligand contact to 1-deoxy-D-xylulose 5-phosphate. Glutamate 126 lines the NADPH pocket. Aspartate 150 contacts Mn(2+). 1-deoxy-D-xylulose 5-phosphate is bound by residues serine 151, glutamate 152, serine 179, and histidine 202. Residue glutamate 152 participates in Mn(2+) binding. Residue glycine 208 participates in NADPH binding. Serine 215, asparagine 220, lysine 221, and glutamate 224 together coordinate 1-deoxy-D-xylulose 5-phosphate. Glutamate 224 contacts Mn(2+).

The protein belongs to the DXR family. The cofactor is Mg(2+). Mn(2+) serves as cofactor.

The catalysed reaction is 2-C-methyl-D-erythritol 4-phosphate + NADP(+) = 1-deoxy-D-xylulose 5-phosphate + NADPH + H(+). It participates in isoprenoid biosynthesis; isopentenyl diphosphate biosynthesis via DXP pathway; isopentenyl diphosphate from 1-deoxy-D-xylulose 5-phosphate: step 1/6. Catalyzes the NADPH-dependent rearrangement and reduction of 1-deoxy-D-xylulose-5-phosphate (DXP) to 2-C-methyl-D-erythritol 4-phosphate (MEP). The chain is 1-deoxy-D-xylulose 5-phosphate reductoisomerase from Cupriavidus taiwanensis (strain DSM 17343 / BCRC 17206 / CCUG 44338 / CIP 107171 / LMG 19424 / R1) (Ralstonia taiwanensis (strain LMG 19424)).